Here is a 362-residue protein sequence, read N- to C-terminus: Glucuronokinase 1 (362 aa).

Pro126–Ala136 serves as a coordination point for ATP. Residue Asp179 is the Proton acceptor of the active site.

The protein belongs to the GHMP kinase family. It depends on Mg(2+) as a cofactor. The cofactor is Mn(2+). Co(2+) is required as a cofactor. Highly expressed in pollen. Detected in seedlings, inflorescences, seeds, leaves and roots.

It catalyses the reaction D-glucuronate + ATP = 1-phospho-alpha-D-glucuronate + ADP + H(+). In terms of biological role, sugar-1-kinase with a strict substrate specificity for D-glucuronic acid and ATP. Involved in the biosynthesis of UDP-glucuronic acid (UDP-GlcA), providing nucleotide sugars for cell-wall polymers. May be also involved in a salvage pathway for glucuronic acid. In Arabidopsis thaliana (Mouse-ear cress), this protein is Glucuronokinase 1 (GLCAK1).